We begin with the raw amino-acid sequence, 394 residues long: ATP phosphoribosyltransferase regulatory subunit (394 aa).

It belongs to the class-II aminoacyl-tRNA synthetase family. HisZ subfamily. In terms of assembly, heteromultimer composed of HisG and HisZ subunits.

Its subcellular location is the cytoplasm. The protein operates within amino-acid biosynthesis; L-histidine biosynthesis; L-histidine from 5-phospho-alpha-D-ribose 1-diphosphate: step 1/9. Its function is as follows. Required for the first step of histidine biosynthesis. May allow the feedback regulation of ATP phosphoribosyltransferase activity by histidine. This Geobacillus thermodenitrificans (strain NG80-2) protein is ATP phosphoribosyltransferase regulatory subunit.